Reading from the N-terminus, the 263-residue chain is Glucosamine-6-phosphate deaminase (263 aa).

The active-site Proton acceptor; for enolization step is aspartate 67. Asparagine 136 functions as the For ring-opening step in the catalytic mechanism. The active-site Proton acceptor; for ring-opening step is histidine 138. Glutamate 143 functions as the For ring-opening step in the catalytic mechanism.

Belongs to the glucosamine/galactosamine-6-phosphate isomerase family. NagB subfamily. Homohexamer.

It carries out the reaction alpha-D-glucosamine 6-phosphate + H2O = beta-D-fructose 6-phosphate + NH4(+). Its pathway is amino-sugar metabolism; N-acetylneuraminate degradation; D-fructose 6-phosphate from N-acetylneuraminate: step 5/5. Functionally, catalyzes the reversible isomerization-deamination of glucosamine 6-phosphate (GlcN6P) to form fructose 6-phosphate (Fru6P) and ammonium ion. The sequence is that of Glucosamine-6-phosphate deaminase from Cellvibrio japonicus (strain Ueda107) (Pseudomonas fluorescens subsp. cellulosa).